The primary structure comprises 343 residues: 4-hydroxythreonine-4-phosphate dehydrogenase (343 aa).

The substrate site is built by His141 and Thr142. Residues His175, His220, and His275 each coordinate a divalent metal cation. Residues Lys283, Asn292, and Arg301 each contribute to the substrate site.

The protein belongs to the PdxA family. Homodimer. The cofactor is Zn(2+). Mg(2+) serves as cofactor. It depends on Co(2+) as a cofactor.

It is found in the cytoplasm. The catalysed reaction is 4-(phosphooxy)-L-threonine + NAD(+) = 3-amino-2-oxopropyl phosphate + CO2 + NADH. Its pathway is cofactor biosynthesis; pyridoxine 5'-phosphate biosynthesis; pyridoxine 5'-phosphate from D-erythrose 4-phosphate: step 4/5. In terms of biological role, catalyzes the NAD(P)-dependent oxidation of 4-(phosphooxy)-L-threonine (HTP) into 2-amino-3-oxo-4-(phosphooxy)butyric acid which spontaneously decarboxylates to form 3-amino-2-oxopropyl phosphate (AHAP). The sequence is that of 4-hydroxythreonine-4-phosphate dehydrogenase from Janthinobacterium sp. (strain Marseille) (Minibacterium massiliensis).